Here is a 387-residue protein sequence, read N- to C-terminus: Intraflagellar transport protein 57 (387 aa).

This sequence belongs to the IFT57 family.

The protein localises to the cell projection. It is found in the cilium. Its subcellular location is the flagellum. It localises to the cytoplasm. The protein resides in the cytoskeleton. The protein localises to the flagellum axoneme. It is found in the flagellum basal body. Component of the intraflagellar transport complex B (IFT-B) involved in flagellar assembly. This Giardia intestinalis (strain ATCC 50803 / WB clone C6) (Giardia lamblia) protein is Intraflagellar transport protein 57.